An 818-amino-acid polypeptide reads, in one-letter code: Dipeptidyl aminopeptidase B (818 aa).

At 1–29 (MEGGEEEVERIPDELFDTKKKHLLDKLIR) the chain is on the cytoplasmic side. A helical; Signal-anchor for type II membrane protein membrane pass occupies residues 30–45 (VGIILVLLIWGTVLLL). The Lumenal portion of the chain corresponds to 46 to 818 (KSIPHHSNTP…KRAFDGQFVK (773 aa)). N-linked (GlcNAc...) asparagine glycosylation is found at Asn-63, Asn-79, Asn-110, Asn-139, Asn-372, Asn-392, and Asn-421. The active-site Charge relay system is the Ser-679. A glycan (N-linked (GlcNAc...) asparagine) is linked at Asn-738. Residues Asp-756 and His-789 each act as charge relay system in the active site.

Belongs to the peptidase S9B family.

The protein localises to the vacuole membrane. This chain is Dipeptidyl aminopeptidase B (DAP2), found in Saccharomyces cerevisiae (strain ATCC 204508 / S288c) (Baker's yeast).